Consider the following 252-residue polypeptide: MPTLSEYKALLAADEVAPAILAALKEDSRIGAGKLLAAYQRRQAHQAAEEVALRYRSRYERQLWGTYEYVAGLDEVGRGPLAGPVVTAAVILPHHFQWPVNDSKQLTAHERNVLYPHILTEAIAVGIGVADNRTIDRENIYHATELAMAQAVDHLRVAPECLLVDAMHVPVDLPQKRLIKGDANSISIAAASIVAKVIRDRLMMMYDKIYPGYDFKDNMGYGTKAHLAGLAAHGVTPIHRRSFGPVRDRLRS.

The RNase H type-2 domain occupies 68–252 (EYVAGLDEVG…FGPVRDRLRS (185 aa)). A divalent metal cation contacts are provided by Asp-74, Glu-75, and Asp-165.

Belongs to the RNase HII family. Requires Mn(2+) as cofactor. Mg(2+) is required as a cofactor.

Its subcellular location is the cytoplasm. The enzyme catalyses Endonucleolytic cleavage to 5'-phosphomonoester.. Functionally, endonuclease that specifically degrades the RNA of RNA-DNA hybrids. The chain is Ribonuclease HII from Lacticaseibacillus paracasei (strain ATCC 334 / BCRC 17002 / CCUG 31169 / CIP 107868 / KCTC 3260 / NRRL B-441) (Lactobacillus paracasei).